A 204-amino-acid polypeptide reads, in one-letter code: Urease accessory protein UreG (204 aa).

12 to 19 (GPVGSGKT) is a binding site for GTP.

This sequence belongs to the SIMIBI class G3E GTPase family. UreG subfamily. Homodimer. UreD, UreF and UreG form a complex that acts as a GTP-hydrolysis-dependent molecular chaperone, activating the urease apoprotein by helping to assemble the nickel containing metallocenter of UreC. The UreE protein probably delivers the nickel.

Its subcellular location is the cytoplasm. In terms of biological role, facilitates the functional incorporation of the urease nickel metallocenter. This process requires GTP hydrolysis, probably effectuated by UreG. This chain is Urease accessory protein UreG, found in Azotobacter vinelandii (strain DJ / ATCC BAA-1303).